Consider the following 215-residue polypeptide: Cytochrome b6 (215 aa).

A helical transmembrane segment spans residues 32 to 52; that stretch reads IFYCLGGITFTLFLVQVATGF. Cysteine 35 serves as a coordination point for heme c. Residues histidine 86 and histidine 100 each contribute to the heme b site. Transmembrane regions (helical) follow at residues 90 to 110, 116 to 136, and 186 to 206; these read ASMM…TGGF, LTWI…VTGY, and LHTF…FLMI. Residues histidine 187 and histidine 202 each contribute to the heme b site.

Belongs to the cytochrome b family. PetB subfamily. As to quaternary structure, the 4 large subunits of the cytochrome b6-f complex are cytochrome b6, subunit IV (17 kDa polypeptide, PetD), cytochrome f and the Rieske protein, while the 4 small subunits are PetG, PetL, PetM and PetN. The complex functions as a dimer. Heme b is required as a cofactor. It depends on heme c as a cofactor.

The protein localises to the plastid. The protein resides in the chloroplast thylakoid membrane. Component of the cytochrome b6-f complex, which mediates electron transfer between photosystem II (PSII) and photosystem I (PSI), cyclic electron flow around PSI, and state transitions. The chain is Cytochrome b6 from Tupiella akineta (Green alga).